A 468-amino-acid polypeptide reads, in one-letter code: Chitoporin (468 aa).

The N-terminal stretch at 1 to 32 (MRTFSGKRSTLALAIAGVTAMSGFMAMPEARA) is a signal peptide.

It belongs to the outer membrane porin (Opr) (TC 1.B.25) family.

Its subcellular location is the cell outer membrane. In terms of biological role, involved in the uptake of chitosugars. The polypeptide is Chitoporin (chiP) (Escherichia coli (strain K12)).